The primary structure comprises 648 residues: Threonine--tRNA ligase (648 aa).

The 63-residue stretch at 1–63 (MAQISLTFPD…TQDAAIAIHT (63 aa)) folds into the TGS domain. The catalytic stretch occupies residues 247–544 (DHRKLGREMN…LIEEHAGKLP (298 aa)). 3 residues coordinate Zn(2+): cysteine 344, histidine 395, and histidine 521.

This sequence belongs to the class-II aminoacyl-tRNA synthetase family. In terms of assembly, homodimer. The cofactor is Zn(2+).

The protein localises to the cytoplasm. It catalyses the reaction tRNA(Thr) + L-threonine + ATP = L-threonyl-tRNA(Thr) + AMP + diphosphate + H(+). Its function is as follows. Catalyzes the attachment of threonine to tRNA(Thr) in a two-step reaction: L-threonine is first activated by ATP to form Thr-AMP and then transferred to the acceptor end of tRNA(Thr). Also edits incorrectly charged L-seryl-tRNA(Thr). This chain is Threonine--tRNA ligase, found in Ruegeria sp. (strain TM1040) (Silicibacter sp.).